Here is a 1004-residue protein sequence, read N- to C-terminus: 26S proteasome non-ATPase regulatory subunit 1 homolog A (1004 aa).

Residue Ala-2 is modified to N-acetylalanine. Lys-166 is covalently cross-linked (Glycyl lysine isopeptide (Lys-Gly) (interchain with G-Cter in ubiquitin)). 10 PC repeats span residues 412-447 (SATA…GGSP), 452-485 (GALY…EVIQ), 487-521 (GACL…VAGE), 522-555 (AAGI…EKII), 557-590 (GLAL…IIRY), 591-626 (GGMY…DVRR), 627-659 (TAVL…PHVR), 661-695 (GAAL…FVRQ), 696-736 (GALI…DTMS), and 739-771 (GAIL…TAVI). Disordered stretches follow at residues 858–905 (EQKA…KKAP) and 959–1004 (VLSL…EYAS). Ser-896 carries the phosphoserine modification. Residues 965–987 (APTSTASPATGTAAAAQGTPASA) are compositionally biased toward low complexity.

This sequence belongs to the proteasome subunit S1 family. As to quaternary structure, component of the 19S regulatory particle (RP/PA700) base subcomplex of the 26S proteasome. The 26S proteasome is composed of a core protease (CP), known as the 20S proteasome, capped at one or both ends by the 19S regulatory particle (RP/PA700). The RP/PA700 complex is composed of at least 17 different subunits in two subcomplexes, the base and the lid, which form the portions proximal and distal to the 20S proteolytic core, respectively. In terms of tissue distribution, ubiquitous with highest expression in flowers.

Functionally, acts as a regulatory subunit of the 26 proteasome which is involved in the ATP-dependent degradation of ubiquitinated proteins. The polypeptide is 26S proteasome non-ATPase regulatory subunit 1 homolog A (RPN2A) (Arabidopsis thaliana (Mouse-ear cress)).